A 129-amino-acid polypeptide reads, in one-letter code: Defensin-like protein 182 (129 aa).

An N-terminal signal peptide occupies residues Met-1–Gly-26. 8 cysteine pairs are disulfide-bonded: Cys-29–Cys-70, Cys-36–Cys-55, Cys-39–Cys-64, Cys-43–Cys-66, Cys-83–Cys-129, Cys-94–Cys-114, Cys-99–Cys-123, and Cys-103–Cys-125.

Belongs to the DEFL family.

It localises to the secreted. Functionally, confers broad-spectrum resistance to pathogens. The protein is Defensin-like protein 182 (PDF3.2) of Arabidopsis thaliana (Mouse-ear cress).